A 472-amino-acid chain; its full sequence is ATP synthase subunit beta (472 aa).

155–162 serves as a coordination point for ATP; that stretch reads GGAGVGKT.

It belongs to the ATPase alpha/beta chains family. F-type ATPases have 2 components, CF(1) - the catalytic core - and CF(0) - the membrane proton channel. CF(1) has five subunits: alpha(3), beta(3), gamma(1), delta(1), epsilon(1). CF(0) has three main subunits: a(1), b(2) and c(9-12). The alpha and beta chains form an alternating ring which encloses part of the gamma chain. CF(1) is attached to CF(0) by a central stalk formed by the gamma and epsilon chains, while a peripheral stalk is formed by the delta and b chains.

The protein localises to the cell membrane. The enzyme catalyses ATP + H2O + 4 H(+)(in) = ADP + phosphate + 5 H(+)(out). Functionally, produces ATP from ADP in the presence of a proton gradient across the membrane. The catalytic sites are hosted primarily by the beta subunits. This is ATP synthase subunit beta from Fervidobacterium islandicum.